A 433-amino-acid chain; its full sequence is Transcriptional enhancer factor TEF-5 (433 aa).

Over residues 1 to 12 (MASNSWNASSSP) the composition is skewed to polar residues. The segment at 1-35 (MASNSWNASSSPGEGREDGQDGMDKSLDNDAEGVW) is disordered. The span at 14–28 (EGREDGQDGMDKSLD) shows a compositional bias: basic and acidic residues. Residues 28-104 (DNDAEGVWSP…QVLARREISG (77 aa)) constitute a DNA-binding region (TEA). Positions 171–433 (GPSQDIKPFA…QHHVYKLVKD (263 aa)) are transcriptional activation.

High levels in cardiac muscle, low in skeletal muscle. Intermediate levels in gizzard and lung, low levels in kidney.

It is found in the nucleus. Transcription factor which plays a key role in the Hippo signaling pathway, a pathway involved in organ size control and tumor suppression by restricting proliferation and promoting apoptosis. The core of this pathway is composed of a kinase cascade wherein MST1/MST2, in complex with its regulatory protein SAV1, phosphorylates and activates LATS1/2 in complex with its regulatory protein MOB1, which in turn phosphorylates and inactivates YAP1 oncoprotein and WWTR1/TAZ. This Gallus gallus (Chicken) protein is Transcriptional enhancer factor TEF-5 (TEAD3).